A 425-amino-acid polypeptide reads, in one-letter code: Probable aminotransferase tcpI (425 aa).

At lysine 256 the chain carries N6-(pyridoxal phosphate)lysine.

It belongs to the class-I pyridoxal-phosphate-dependent aminotransferase family. Pyridoxal 5'-phosphate serves as cofactor.

Its pathway is secondary metabolite biosynthesis. Probable aminotransferase; part of the gene cluster that mediates the biosynthesis of an unusual class of epipolythiodioxopiperazines (ETPs) lacking the reactive thiol group important for toxicity. Firstly, L-tyrosine is prenylated by tcpD, before undergoing condensation with L-glycine in a reaction catalyzed by the NRPS tcpP leading to the diketopiperazine (DKP) backbone. Afterwards the alpha-carbon of tyrosine is oxidized by the cytochrome P450 tcpC to form a hydroxyl group. However, in contrast other ETP biosynthesis pathways studied so far, tcpC is not able to bishydroxylate the DKP at both alpha-carbon positions, but hydroxylates the alpha-carbon of the tyrosine part and the nitrogen of the glycine part. The next steps involve an alpha,beta-elimination reaction catalyzed by tcpI, a methylation by the methyltransferase tcpN the action of the four enzyme cascade tcpG/K/J/I. Due to a dysfunctional cytochrome P450 monooxygenase tcpC, the pathway leads to the biosynthesis of probable non-toxic metabolites lacking the reactive thiol group. The sequence is that of Probable aminotransferase tcpI from Claviceps purpurea (strain 20.1) (Ergot fungus).